Reading from the N-terminus, the 94-residue chain is Co-chaperonin GroES (94 aa).

The protein belongs to the GroES chaperonin family. As to quaternary structure, heptamer of 7 subunits arranged in a ring. Interacts with the chaperonin GroEL.

It is found in the cytoplasm. Functionally, together with the chaperonin GroEL, plays an essential role in assisting protein folding. The GroEL-GroES system forms a nano-cage that allows encapsulation of the non-native substrate proteins and provides a physical environment optimized to promote and accelerate protein folding. GroES binds to the apical surface of the GroEL ring, thereby capping the opening of the GroEL channel. In Geobacillus thermodenitrificans (strain NG80-2), this protein is Co-chaperonin GroES.